Reading from the N-terminus, the 501-residue chain is DEAD-box ATP-dependent RNA helicase 20 (501 aa).

Basic and acidic residues-rich tracts occupy residues 1–20 (MSRY…RRSD) and 38–53 (SKKD…KLDL). Positions 1–53 (MSRYDSRTGDSTSYRDRRSDSGFGGTSSYGSSGSHTSSKKDNDGNESPRKLDL) are disordered. The Q motif motif lies at 99-127 (KSFRDVGFPDYVLEEVKKAGFTEPTPIQS). One can recognise a Helicase ATP-binding domain in the interval 130-305 (WPMAMKGRDL…KKFLYNPYKV (176 aa)). Residue 143–150 (AETGSGKT) coordinates ATP. Positions 253–256 (DEAD) match the DEAD box motif. Residues 333 to 478 (KLVKLLEDIM…KVSPELASMG (146 aa)) form the Helicase C-terminal domain. The disordered stretch occupies residues 473 to 501 (ELASMGRSTAPPPPGLGGFRDRGSRRGWS). Basic and acidic residues predominate over residues 491-501 (FRDRGSRRGWS).

Belongs to the DEAD box helicase family. DDX5/DBP2 subfamily.

It localises to the nucleus. The enzyme catalyses ATP + H2O = ADP + phosphate + H(+). Functionally, ATP-dependent RNA helicase involved nonsense-mediated mRNA decay and ribosome biogenesis through rRNA processing. This is DEAD-box ATP-dependent RNA helicase 20 (RH20) from Arabidopsis thaliana (Mouse-ear cress).